Consider the following 284-residue polypeptide: L-ribulose-5-phosphate 3-epimerase UlaE (284 aa).

The protein belongs to the L-ribulose-5-phosphate 3-epimerase family.

It carries out the reaction L-ribulose 5-phosphate = L-xylulose 5-phosphate. The protein operates within cofactor degradation; L-ascorbate degradation; D-xylulose 5-phosphate from L-ascorbate: step 3/4. Functionally, catalyzes the isomerization of L-xylulose-5-phosphate to L-ribulose-5-phosphate. Is involved in the anaerobic L-ascorbate utilization. This is L-ribulose-5-phosphate 3-epimerase UlaE from Salmonella paratyphi A (strain AKU_12601).